A 61-amino-acid chain; its full sequence is Putative antitoxin APE_0472b.1 (61 aa).

It belongs to the UPF0165 family.

In terms of biological role, possibly the antitoxin component of a type II toxin-antitoxin (TA) system. The sequence is that of Putative antitoxin APE_0472b.1 from Aeropyrum pernix (strain ATCC 700893 / DSM 11879 / JCM 9820 / NBRC 100138 / K1).